The primary structure comprises 248 residues: Pulmonary surfactant-associated protein A (248 aa).

A signal peptide spans 1 to 20 (MLLCSLTLTLILLAVSGTKC). The 70-residue stretch at 31 to 100 (GVPGIPGSPG…PGERGPPGPP (70 aa)) folds into the Collagen-like domain. Residues 34–105 (GIPGSPGLPG…PPGPPAYPDE (72 aa)) are disordered. The span at 54-65 (PGPPGPIGPPGG) shows a compositional bias: pro residues. Over residues 84–93 (ERGDKGEPGE) the composition is skewed to basic and acidic residues. Positions 134 to 247 (VGEKVFSTNG…CLQYRLAICE (114 aa)) constitute a C-type lectin domain. 2 disulfide bridges follow: C155-C246 and C224-C238. The N-linked (GlcNAc...) asparagine glycan is linked to N207. Residues E215, R217, N234, and D235 each contribute to the Ca(2+) site.

Belongs to the SFTPA family. Oligomeric complex of 6 set of homotrimers.

It is found in the secreted. It localises to the extracellular space. The protein resides in the extracellular matrix. Its subcellular location is the surface film. Its function is as follows. In presence of calcium ions, it binds to surfactant phospholipids and contributes to lower the surface tension at the air-liquid interface in the alveoli of the mammalian lung and is essential for normal respiration. Enhances the expression of MYO18A/SP-R210 on alveolar macrophages. This is Pulmonary surfactant-associated protein A (SFTPA1) from Equus caballus (Horse).